The chain runs to 551 residues: Formate--tetrahydrofolate ligase (551 aa).

T65–T72 is a binding site for ATP.

Belongs to the formate--tetrahydrofolate ligase family.

It catalyses the reaction (6S)-5,6,7,8-tetrahydrofolate + formate + ATP = (6R)-10-formyltetrahydrofolate + ADP + phosphate. It functions in the pathway one-carbon metabolism; tetrahydrofolate interconversion. The sequence is that of Formate--tetrahydrofolate ligase from Thermosipho africanus (strain TCF52B).